The sequence spans 239 residues: Large ribosomal subunit protein uL1 (239 aa).

The protein belongs to the universal ribosomal protein uL1 family. In terms of assembly, part of the 50S ribosomal subunit.

In terms of biological role, binds directly to 23S rRNA. The L1 stalk is quite mobile in the ribosome, and is involved in E site tRNA release. Its function is as follows. Protein L1 is also a translational repressor protein, it controls the translation of the L11 operon by binding to its mRNA. This Rickettsia bellii (strain OSU 85-389) protein is Large ribosomal subunit protein uL1.